Consider the following 380-residue polypeptide: MGIHGLAKLIADHAPGAIKEQDIKNYFGRKIAIDASMCIYQFLIAVRQDGNVLQSEDGETTSHLMGMFYRTIRMLENGIKPVYVFDGKPPQLKSAELEKRGERRAEAEKMLAKAQELGEQENIDKFSKRLVKVTKQHNDDCKKLLTLMGVPYIEAPCEAEASCAALVKEGKVFATATEDMDGLTFGTNVLLRHLTASEAKKLPVQEFHFNRILQDIGLTSEQFIDLCILLGCDYCGTIKGIGPKRAIDLIRQHGSIEEILENIDTSKHPAPEDWLYKEARNLFLKPEVVDSSTVDLKWREPDEEALIQFMCSEKQFSEDRIRNGCKKMMKSRQGSTQGRLDSFFSVTGSLSSKRKEPETKGSAKKKQKTGATPGKFRKGK.

The interval 1 to 104 (MGIHGLAKLI…AELEKRGERR (104 aa)) is N-domain. Residue aspartate 34 coordinates Mg(2+). Positions 47 and 70 each coordinate DNA. Residues aspartate 86, glutamate 158, glutamate 160, aspartate 179, and aspartate 181 each contribute to the Mg(2+) site. Residues 122–253 (NIDKFSKRLV…KRAIDLIRQH (132 aa)) form an I-domain region. A DNA-binding site is contributed by glutamate 158. The DNA site is built by glycine 231 and aspartate 233. Aspartate 233 contacts Mg(2+). Positions 327-380 (KMMKSRQGSTQGRLDSFFSVTGSLSSKRKEPETKGSAKKKQKTGATPGKFRKGK) are disordered. Over residues 332-351 (RQGSTQGRLDSFFSVTGSLS) the composition is skewed to polar residues. The interval 336–344 (TQGRLDSFF) is interaction with PCNA.

This sequence belongs to the XPG/RAD2 endonuclease family. FEN1 subfamily. Interacts with PCNA. Three molecules of fen1 bind to one PCNA trimer with each molecule binding to one PCNA monomer. PCNA stimulates the nuclease activity without altering cleavage specificity. Requires Mg(2+) as cofactor. In terms of processing, phosphorylated. Phosphorylation upon DNA damage induces relocalization to the nuclear plasma.

It localises to the nucleus. The protein resides in the nucleolus. It is found in the nucleoplasm. Its subcellular location is the mitochondrion. In terms of biological role, structure-specific nuclease with 5'-flap endonuclease and 5'-3' exonuclease activities involved in DNA replication and repair. During DNA replication, cleaves the 5'-overhanging flap structure that is generated by displacement synthesis when DNA polymerase encounters the 5'-end of a downstream Okazaki fragment. It enters the flap from the 5'-end and then tracks to cleave the flap base, leaving a nick for ligation. Also involved in the long patch base excision repair (LP-BER) pathway, by cleaving within the apurinic/apyrimidinic (AP) site-terminated flap. Acts as a genome stabilization factor that prevents flaps from equilibrating into structures that lead to duplications and deletions. Also possesses 5'-3' exonuclease activity on nicked or gapped double-stranded DNA, and exhibits RNase H activity. Also involved in replication and repair of rDNA and in repairing mitochondrial DNA. This is Flap endonuclease 1 (fen1) from Xiphophorus maculatus (Southern platyfish).